The following is a 662-amino-acid chain: UvrABC system protein B (662 aa).

A Helicase ATP-binding domain is found at Asp-31–Arg-188. Gly-44–Thr-51 is a binding site for ATP. Positions Tyr-97–Val-120 match the Beta-hairpin motif. A Helicase C-terminal domain is found at Gln-435 to Ile-601. The UVR domain occupies Lys-626–Met-661.

The protein belongs to the UvrB family. In terms of assembly, forms a heterotetramer with UvrA during the search for lesions. Interacts with UvrC in an incision complex.

Its subcellular location is the cytoplasm. In terms of biological role, the UvrABC repair system catalyzes the recognition and processing of DNA lesions. A damage recognition complex composed of 2 UvrA and 2 UvrB subunits scans DNA for abnormalities. Upon binding of the UvrA(2)B(2) complex to a putative damaged site, the DNA wraps around one UvrB monomer. DNA wrap is dependent on ATP binding by UvrB and probably causes local melting of the DNA helix, facilitating insertion of UvrB beta-hairpin between the DNA strands. Then UvrB probes one DNA strand for the presence of a lesion. If a lesion is found the UvrA subunits dissociate and the UvrB-DNA preincision complex is formed. This complex is subsequently bound by UvrC and the second UvrB is released. If no lesion is found, the DNA wraps around the other UvrB subunit that will check the other stand for damage. The polypeptide is UvrABC system protein B (Streptococcus gordonii (strain Challis / ATCC 35105 / BCRC 15272 / CH1 / DL1 / V288)).